The primary structure comprises 435 residues: GTPase Der (435 aa).

2 consecutive EngA-type G domains span residues 4–167 (PVVA…GDKA) and 175–350 (IRFS…ENQT). Residues 10-17 (GRPNVGKS), 57-61 (DTGGI), 119-122 (NKAD), 181-188 (GRPNVGKS), 228-232 (DTAGI), and 293-296 (NKWD) each bind GTP. A KH-like domain is found at 351–435 (RRIQSSVLND…PIKILARKRK (85 aa)).

This sequence belongs to the TRAFAC class TrmE-Era-EngA-EngB-Septin-like GTPase superfamily. EngA (Der) GTPase family. Associates with the 50S ribosomal subunit.

Functionally, GTPase that plays an essential role in the late steps of ribosome biogenesis. The chain is GTPase Der from Lactobacillus johnsonii (strain CNCM I-12250 / La1 / NCC 533).